Consider the following 194-residue polypeptide: dITP/XTP pyrophosphatase (194 aa).

8 to 13 (TSNPGK) serves as a coordination point for substrate. Mg(2+)-binding residues include Glu-38 and Asp-67. The active-site Proton acceptor is Asp-67. Substrate contacts are provided by residues Ser-68, 152-155 (FGYD), Lys-175, and 180-181 (HR).

This sequence belongs to the HAM1 NTPase family. In terms of assembly, homodimer. Requires Mg(2+) as cofactor.

It catalyses the reaction XTP + H2O = XMP + diphosphate + H(+). The catalysed reaction is dITP + H2O = dIMP + diphosphate + H(+). The enzyme catalyses ITP + H2O = IMP + diphosphate + H(+). Pyrophosphatase that catalyzes the hydrolysis of nucleoside triphosphates to their monophosphate derivatives, with a high preference for the non-canonical purine nucleotides XTP (xanthosine triphosphate), dITP (deoxyinosine triphosphate) and ITP. Seems to function as a house-cleaning enzyme that removes non-canonical purine nucleotides from the nucleotide pool, thus preventing their incorporation into DNA/RNA and avoiding chromosomal lesions. In Legionella pneumophila (strain Lens), this protein is dITP/XTP pyrophosphatase.